The sequence spans 419 residues: Cysteine desulfurase (419 aa).

Pyridoxal 5'-phosphate contacts are provided by residues A69–T70, N157, Q185, and S205–H207. K208 bears the N6-(pyridoxal phosphate)lysine mark. T245 is a pyridoxal 5'-phosphate binding site. C333 functions as the Cysteine persulfide intermediate in the catalytic mechanism. C333 is a binding site for [2Fe-2S] cluster. A disordered region spans residues T392–S419. Positions A404–S413 are enriched in polar residues.

Belongs to the class-V pyridoxal-phosphate-dependent aminotransferase family. NifS/IscS subfamily. In terms of assembly, homodimer. Pyridoxal 5'-phosphate serves as cofactor.

It carries out the reaction (sulfur carrier)-H + L-cysteine = (sulfur carrier)-SH + L-alanine. Functionally, catalyzes the removal of elemental sulfur atoms from cysteine to produce alanine. Seems to participate in the biosynthesis of the nitrogenase metalloclusters by providing the inorganic sulfur required for the Fe-S core formation. The sequence is that of Cysteine desulfurase from Frankia sp. (strain EuIK1).